The primary structure comprises 200 residues: GTP-binding protein rho2 (200 aa).

Residue 15 to 22 coordinates GTP; the sequence is GDGACGKT. The short motif at 37 to 45 is the Effector region element; that stretch reads YVPTVFENY. Residues 62 to 66 and 120 to 123 each bind GTP; these read DTAGQ and MKAD. A Cysteine methyl ester modification is found at cysteine 197. The S-geranylgeranyl cysteine moiety is linked to residue cysteine 197. Positions 198-200 are cleaved as a propeptide — removed in mature form; that stretch reads IIS.

The protein belongs to the small GTPase superfamily. Rho family. Interacts with pck2.

The protein localises to the cell membrane. Functionally, involved in cell morphogenesis, the maintenance of growth direction, control of polarity and of cell wall integrity. Regulates the synthesis of alpha-D-glucan through activation of pck2. The protein is GTP-binding protein rho2 (rho2) of Schizosaccharomyces pombe (strain 972 / ATCC 24843) (Fission yeast).